The chain runs to 134 residues: Citrolysin protein 2 (134 aa).

This Citrobacter freundii protein is Citrolysin protein 2.